Here is a 485-residue protein sequence, read N- to C-terminus: UDP-N-acetylmuramate--L-alanine ligase (485 aa).

112–118 (GTHGKTT) provides a ligand contact to ATP.

Belongs to the MurCDEF family.

It localises to the cytoplasm. The catalysed reaction is UDP-N-acetyl-alpha-D-muramate + L-alanine + ATP = UDP-N-acetyl-alpha-D-muramoyl-L-alanine + ADP + phosphate + H(+). It participates in cell wall biogenesis; peptidoglycan biosynthesis. Cell wall formation. The chain is UDP-N-acetylmuramate--L-alanine ligase from Variovorax paradoxus (strain S110).